A 342-amino-acid polypeptide reads, in one-letter code: Glycerol-3-phosphate dehydrogenase [NAD(P)+] (342 aa).

Residues serine 13, tryptophan 14, and lysine 108 each coordinate NADPH. Lysine 108, glycine 139, and serine 141 together coordinate sn-glycerol 3-phosphate. NADPH is bound at residue alanine 143. 5 residues coordinate sn-glycerol 3-phosphate: lysine 194, aspartate 247, serine 257, arginine 258, and asparagine 259. Residue lysine 194 is the Proton acceptor of the active site. Arginine 258 is a binding site for NADPH. The NADPH site is built by valine 282 and glutamate 284.

Belongs to the NAD-dependent glycerol-3-phosphate dehydrogenase family.

Its subcellular location is the cytoplasm. The catalysed reaction is sn-glycerol 3-phosphate + NAD(+) = dihydroxyacetone phosphate + NADH + H(+). It catalyses the reaction sn-glycerol 3-phosphate + NADP(+) = dihydroxyacetone phosphate + NADPH + H(+). It functions in the pathway membrane lipid metabolism; glycerophospholipid metabolism. Its function is as follows. Catalyzes the reduction of the glycolytic intermediate dihydroxyacetone phosphate (DHAP) to sn-glycerol 3-phosphate (G3P), the key precursor for phospholipid synthesis. This is Glycerol-3-phosphate dehydrogenase [NAD(P)+] from Lactococcus lactis subsp. cremoris (strain MG1363).